The sequence spans 501 residues: Aldehyde dehydrogenase 1A1 (501 aa).

An N-acetylserine modification is found at serine 2. N6-acetyllysine occurs at positions 91 and 128. NAD(+) is bound by residues 167 to 170 (IPWN), 193 to 196 (KPAE), 226 to 227 (GP), and 246 to 247 (GS). Lysine 252 bears the N6-acetyllysine mark. Glutamate 269 functions as the Proton acceptor in the catalytic mechanism. An NAD(+)-binding site is contributed by 269 to 271 (ELG). The Nucleophile role is filled by cysteine 303. A mediates interaction with PRMT3 region spans residues 336 to 501 (LTPGVSQGPQ…VTIKISQKNS (166 aa)). Threonine 337 bears the Phosphothreonine mark. 349–353 (EQYEK) serves as a coordination point for NAD(+). 2 positions are modified to N6-acetyllysine: lysine 353 and lysine 367. 400-402 (EIF) contributes to the NAD(+) binding site. Lysine 410 bears the N6-acetyllysine mark. Serine 413 carries the post-translational modification Phosphoserine. N6-acetyllysine occurs at positions 419 and 495.

Belongs to the aldehyde dehydrogenase family. As to quaternary structure, homotetramer. Interacts with PRMT3; the interaction is direct, inhibits ALDH1A1 aldehyde dehydrogenase activity and is independent of the methyltransferase activity of PRMT3. Post-translationally, the N-terminus is blocked most probably by acetylation. In terms of tissue distribution, expressed in muscle, liver, small intestine, kidney, brain, lung, heart but not detected in erythrocytes (at protein level).

It is found in the cytoplasm. The protein resides in the cytosol. The protein localises to the cell projection. It localises to the axon. The enzyme catalyses an aldehyde + NAD(+) + H2O = a carboxylate + NADH + 2 H(+). It carries out the reaction all-trans-retinal + NAD(+) + H2O = all-trans-retinoate + NADH + 2 H(+). It catalyses the reaction 9-cis-retinal + NAD(+) + H2O = 9-cis-retinoate + NADH + 2 H(+). The catalysed reaction is 11-cis-retinal + NAD(+) + H2O = 11-cis-retinoate + NADH + 2 H(+). The enzyme catalyses 13-cis-retinal + NAD(+) + H2O = 13-cis-retinoate + NADH + 2 H(+). It carries out the reaction 3-deoxyglucosone + NAD(+) + H2O = 2-dehydro-3-deoxy-D-gluconate + NADH + 2 H(+). It catalyses the reaction (E)-4-hydroxynon-2-enal + NAD(+) + H2O = (E)-4-hydroxynon-2-enoate + NADH + 2 H(+). The catalysed reaction is malonaldehyde + NAD(+) + H2O = 3-oxopropanoate + NADH + 2 H(+). The enzyme catalyses hexanal + NAD(+) + H2O = hexanoate + NADH + 2 H(+). It carries out the reaction propanal + NAD(+) + H2O = propanoate + NADH + 2 H(+). It catalyses the reaction acetaldehyde + NAD(+) + H2O = acetate + NADH + 2 H(+). The catalysed reaction is benzaldehyde + NAD(+) + H2O = benzoate + NADH + 2 H(+). The enzyme catalyses 4-aminobutanal + NAD(+) + H2O = 4-aminobutanoate + NADH + 2 H(+). The protein operates within cofactor metabolism; retinol metabolism. Cytosolic dehydrogenase that catalyzes the irreversible oxidation of a wide range of aldehydes to their corresponding carboxylic acid. Functions downstream of retinol dehydrogenases and catalyzes the oxidation of retinaldehyde into retinoic acid, the second step in the oxidation of retinol/vitamin A into retinoic acid. This pathway is crucial to control the levels of retinol and retinoic acid, two important molecules which excess can be teratogenic and cytotoxic. Also oxidizes aldehydes resulting from lipid peroxidation like (E)-4-hydroxynon-2-enal/HNE, malonaldehyde and hexanal that form protein adducts and are highly cytotoxic. By participating for instance to the clearance of (E)-4-hydroxynon-2-enal/HNE in the lens epithelium prevents the formation of HNE-protein adducts and lens opacification. Also functions downstream of fructosamine-3-kinase in the fructosamine degradation pathway by catalyzing the oxidation of 3-deoxyglucosone, the carbohydrate product of fructosamine 3-phosphate decomposition, which is itself a potent glycating agent that may react with lysine and arginine side-chains of proteins. Also has an aminobutyraldehyde dehydrogenase activity and is probably part of an alternative pathway for the biosynthesis of GABA/4-aminobutanoate in midbrain, thereby playing a role in GABAergic synaptic transmission. The protein is Aldehyde dehydrogenase 1A1 of Bos taurus (Bovine).